The sequence spans 499 residues: Tetrathionate hydrolase (499 aa).

Positions 1 to 32 are cleaved as a signal peptide; sequence MPSIVRNHGPHNKILLSALLLALFGWVPLASA.

This sequence belongs to the tetrathionate hydrolase family. As to quaternary structure, homodimer.

The protein localises to the cell membrane. The catalysed reaction is tetrathionate + H2O = sulfur + thiosulfate + sulfate + H(+). Functionally, catalyzes the hydrolysis of tetrathionate to generate elemental sulfur, thiosulfate and sulfate. The sequence is that of Tetrathionate hydrolase from Acidithiobacillus ferrooxidans (strain ATCC 23270 / DSM 14882 / CIP 104768 / NCIMB 8455) (Ferrobacillus ferrooxidans (strain ATCC 23270)).